The primary structure comprises 489 residues: Adenosylhomocysteinase (489 aa).

Substrate-binding residues include threonine 68, aspartate 151, and glutamate 213. Position 214–216 (214–216) interacts with NAD(+); sequence TTT. Substrate contacts are provided by lysine 243 and aspartate 247. Residues asparagine 248, 277-282, glutamate 300, asparagine 335, 356-358, and asparagine 403 contribute to the NAD(+) site; these read GYGDVG and IGH.

Belongs to the adenosylhomocysteinase family. NAD(+) serves as cofactor.

Its subcellular location is the cytoplasm. The catalysed reaction is S-adenosyl-L-homocysteine + H2O = L-homocysteine + adenosine. Its pathway is amino-acid biosynthesis; L-homocysteine biosynthesis; L-homocysteine from S-adenosyl-L-homocysteine: step 1/1. Its function is as follows. May play a key role in the regulation of the intracellular concentration of adenosylhomocysteine. In Mycobacterium sp. (strain KMS), this protein is Adenosylhomocysteinase.